A 372-amino-acid chain; its full sequence is sn-glycerol-3-phosphate import ATP-binding protein UgpC (372 aa).

An ABC transporter domain is found at 2–233; the sequence is LDIKQLVKTY…PASTFVASFI (232 aa). Residue 35–42 coordinates ATP; the sequence is GPSGCGKS.

It belongs to the ABC transporter superfamily. sn-glycerol-3-phosphate importer (TC 3.A.1.1.3) family. As to quaternary structure, the complex is composed of two ATP-binding proteins (UgpC), two transmembrane proteins (UgpA and UgpE) and a solute-binding protein (UgpB).

The protein resides in the cell inner membrane. The enzyme catalyses sn-glycerol 3-phosphate(out) + ATP + H2O = sn-glycerol 3-phosphate(in) + ADP + phosphate + H(+). Functionally, part of the ABC transporter complex UgpBAEC involved in sn-glycerol-3-phosphate (G3P) import. Responsible for energy coupling to the transport system. This is sn-glycerol-3-phosphate import ATP-binding protein UgpC from Vibrio cholerae serotype O1 (strain ATCC 39315 / El Tor Inaba N16961).